The sequence spans 277 residues: Glutamate racemase (277 aa).

Substrate-binding positions include 25–26 (DS) and 57–58 (YG). Catalysis depends on Cys89, which acts as the Proton donor/acceptor. A substrate-binding site is contributed by 90–91 (NT). Cys204 (proton donor/acceptor) is an active-site residue. 205–206 (TH) contributes to the substrate binding site.

It belongs to the aspartate/glutamate racemases family.

The catalysed reaction is L-glutamate = D-glutamate. It participates in cell wall biogenesis; peptidoglycan biosynthesis. In terms of biological role, provides the (R)-glutamate required for cell wall biosynthesis. This chain is Glutamate racemase, found in Brucella abortus (strain 2308).